Here is a 230-residue protein sequence, read N- to C-terminus: MKIGIIGAMEPEVAHLVESMENPSSTTIAGIEFVAGQLAGKDVIVTRSGIGKVTASIATTLLIEKYAPDVIINTGSAGGFADELAIGDIVISSEVRHHDVDVTAFGYEIGQMAQQPAAFIPDAKLVAAAQKAVASLGEVKAIEGLICTGDSFICDPVRTKTMLENFPTMAACEMEGAAIAQVCHQFGVPFVVIRSLSDNANNDSPVDFDEYIVKAGHHSALMVIALLKQL.

The active-site Proton acceptor is E12. Substrate-binding positions include G78, I153, and M174 to E175. D198 functions as the Proton donor in the catalytic mechanism.

This sequence belongs to the PNP/UDP phosphorylase family. MtnN subfamily.

It catalyses the reaction S-adenosyl-L-homocysteine + H2O = S-(5-deoxy-D-ribos-5-yl)-L-homocysteine + adenine. The catalysed reaction is S-methyl-5'-thioadenosine + H2O = 5-(methylsulfanyl)-D-ribose + adenine. The enzyme catalyses 5'-deoxyadenosine + H2O = 5-deoxy-D-ribose + adenine. The protein operates within amino-acid biosynthesis; L-methionine biosynthesis via salvage pathway; S-methyl-5-thio-alpha-D-ribose 1-phosphate from S-methyl-5'-thioadenosine (hydrolase route): step 1/2. Its function is as follows. Catalyzes the irreversible cleavage of the glycosidic bond in both 5'-methylthioadenosine (MTA) and S-adenosylhomocysteine (SAH/AdoHcy) to adenine and the corresponding thioribose, 5'-methylthioribose and S-ribosylhomocysteine, respectively. Also cleaves 5'-deoxyadenosine, a toxic by-product of radical S-adenosylmethionine (SAM) enzymes, into 5-deoxyribose and adenine. The polypeptide is 5'-methylthioadenosine/S-adenosylhomocysteine nucleosidase (Shewanella halifaxensis (strain HAW-EB4)).